Consider the following 493-residue polypeptide: Cytochrome c-552 (493 aa).

A signal peptide spans 1–25; the sequence is MEKKLKSWQGWLLFCGAMAVVFVLG. H116 provides a ligand contact to heme c. Residues C144, C147, and K148 each contribute to the heme site. Residues C182, C185, H186, C224, C227, and H228 each contribute to the heme c site. Residues E230, Y231, K276, and Q278 each coordinate Ca(2+). Position 231 (Y231) interacts with substrate. Position 279 (H279) interacts with substrate. The heme c site is built by H290, C297, C300, H301, H315, C328, C331, H332, and H407.

This sequence belongs to the cytochrome c-552 family. Ca(2+) serves as cofactor. Heme c is required as a cofactor.

The protein resides in the periplasm. It carries out the reaction 6 Fe(III)-[cytochrome c] + NH4(+) + 2 H2O = 6 Fe(II)-[cytochrome c] + nitrite + 8 H(+). It functions in the pathway nitrogen metabolism; nitrate reduction (assimilation). Catalyzes the reduction of nitrite to ammonia, consuming six electrons in the process. This Bacteroides fragilis (strain ATCC 25285 / DSM 2151 / CCUG 4856 / JCM 11019 / LMG 10263 / NCTC 9343 / Onslow / VPI 2553 / EN-2) protein is Cytochrome c-552.